We begin with the raw amino-acid sequence, 544 residues long: CTP synthase (544 aa).

An amidoligase domain region spans residues 1–266 (MSTKFIFVTG…DYFVCRRFHL (266 aa)). Ser14 is a CTP binding site. Residue Ser14 participates in UTP binding. ATP is bound by residues 15-20 (SLGKGI) and Asp72. Residues Asp72 and Glu140 each coordinate Mg(2+). CTP-binding positions include 147 to 149 (DIE), 187 to 192 (KTKPTQ), and Lys223. UTP-binding positions include 187-192 (KTKPTQ) and Lys223. The Glutamine amidotransferase type-1 domain occupies 291 to 542 (TIGMVGKYIE…VAAAHIHQKA (252 aa)). Gly352 is an L-glutamine binding site. Cys379 acts as the Nucleophile; for glutamine hydrolysis in catalysis. L-glutamine is bound by residues 380 to 383 (LGMQ), Glu403, and Arg470. Residues His515 and Glu517 contribute to the active site.

It belongs to the CTP synthase family. Homotetramer.

It catalyses the reaction UTP + L-glutamine + ATP + H2O = CTP + L-glutamate + ADP + phosphate + 2 H(+). The catalysed reaction is L-glutamine + H2O = L-glutamate + NH4(+). The enzyme catalyses UTP + NH4(+) + ATP = CTP + ADP + phosphate + 2 H(+). The protein operates within pyrimidine metabolism; CTP biosynthesis via de novo pathway; CTP from UDP: step 2/2. Allosterically activated by GTP, when glutamine is the substrate; GTP has no effect on the reaction when ammonia is the substrate. The allosteric effector GTP functions by stabilizing the protein conformation that binds the tetrahedral intermediate(s) formed during glutamine hydrolysis. Inhibited by the product CTP, via allosteric rather than competitive inhibition. Its function is as follows. Catalyzes the ATP-dependent amination of UTP to CTP with either L-glutamine or ammonia as the source of nitrogen. Regulates intracellular CTP levels through interactions with the four ribonucleotide triphosphates. The protein is CTP synthase of Pseudoalteromonas translucida (strain TAC 125).